The sequence spans 712 residues: MTPHVMKRDGCKVPFKSERIKEAILRAAKAAGVDDADYCATVAEVVSSQMNARSQVDINEIQTAVENQLMSGPYKQLARAYIEYRHDRDIQREKRGRLNQEIRGLVEQTNSALLNENANKDSKVIPTQRDLLAGIVAKHYARQHLLPRDVVQAHERGDIHYHDLDYSPFFPMFNCMLIDLKGMLTQGFKMGNAEIEPPKSISTATAVTAQIIAQVASHIYGGTTINRIDEVLAPFVTESYNKHRKTADEWQIPDAEGYARSRTEKECYDAFQSLEYEVNTLHTANGQTPFVTFGFGLGTSWESRLIQASILRNRIAGLGKNRKTAVFPKLVFAIRDGLNHKFGDPNYDIKQLALECASKRMYPDILNYDQVVKVTGSFKTPMGCRSFLGVWENENGEQIHDGRNNLGVISLNLPRIALEAKGDETAFWKLLDERLALARKALMTRIARLEGVKARVAPILYMEGACGVRLKADDDVSEIFKNGRASISLGYIGIHETINALFGGEHLYDSEQLRAKGIAIVERLRQAVDQWKDETGYGFSLYSTPSENLCDRFCRLDTAEFGVVPGVTDKGYYTNSFHLDVEKKVNPYDKIDFEAPYPPLANGGFICYGEYPNIQHNLKALEDVWDYSYQHVPYYGTNTPIDECYECGFTGEFECTSKGFTCPKCGNHDAARVSVTRRVCGYLGSPDARPFNAGKQEEVKRRVKHLGNGQIG.

The 90-residue stretch at Pro3–Arg92 folds into the ATP-cone domain. Residues Lys583–Asn708 enclose the Glycine radical domain. Residues Cys644, Cys647, Cys662, and Cys665 each contribute to the Zn(2+) site. Residue Gly681 is modified to Glycine radical.

Belongs to the anaerobic ribonucleoside-triphosphate reductase family. Forms a tetramer composed of two NrdD and two NrdG subunits.

It catalyses the reaction a ribonucleoside 5'-triphosphate + formate + H(+) = a 2'-deoxyribonucleoside 5'-triphosphate + CO2 + H2O. Activated under anaerobic conditions by NrdG, a tightly associated activase. Activation involves the formation of a glycyl radical at Gly-681. Its function is as follows. Catalyzes the conversion of ribonucleotides into deoxyribonucleotides, which are required for DNA synthesis and repair. The sequence is that of Anaerobic ribonucleoside-triphosphate reductase (nrdD) from Salmonella typhimurium (strain LT2 / SGSC1412 / ATCC 700720).